The following is an 80-amino-acid chain: FLLCFFLVADVSYGINKDCLLPMDVGRCRARHPRYYYNSSSKRCEMFNYGGCRGNANNFITKKECEKVCGVRSRDSPKEN.

Positions 1–14 are cleaved as a signal peptide; sequence FLLCFFLVADVSYG. Residues 19-69 enclose the BPTI/Kunitz inhibitor domain; that stretch reads CLLPMDVGRCRARHPRYYYNSSSKRCEMFNYGGCRGNANNFITKKECEKVC. Cystine bridges form between Cys19-Cys69, Cys28-Cys52, and Cys44-Cys65. The propeptide occupies 74 to 80; that stretch reads RDSPKEN.

This sequence belongs to the venom Kunitz-type family. Sea anemone type 2 potassium channel toxin subfamily.

It localises to the secreted. Its subcellular location is the nematocyst. Its function is as follows. Serine protease inhibitor that inhibits both tissue and plasma kallikreins. Has hemolytic activity. Inhibits voltage-gated potassium channels (Kv). This chain is U-actitoxin-Avd3s, found in Anemonia viridis (Snakelocks anemone).